The following is a 382-amino-acid chain: Protein MGF 360-4L (382 aa).

The protein belongs to the asfivirus MGF 360 family.

Plays a role in virus cell tropism, and may be required for efficient virus replication in macrophages. The protein is Protein MGF 360-4L of Ornithodoros (relapsing fever ticks).